We begin with the raw amino-acid sequence, 169 residues long: MADESPKSIYDFTVKDIGGNDVSLDQYKGKTLLVVNVASKCGLTDANYKELNVLYEKYKEQGLEILAFPCNQFLGQEPGNNEEIQQTVCTRFKAEFPIFDKVDVNGKNTAPLYKYLKAEKGGLLIDAIKWNFTKFLVSPDGKVLQRYSPRTSPLQFEKDIQTALGQASS.

The active site involves Cys41.

It belongs to the glutathione peroxidase family. Interacts with DJ1A. In terms of tissue distribution, expressed in leaves, stems, flowers, green siliques and roots.

It is found in the cytoplasm. Its subcellular location is the cytosol. The protein resides in the nucleus. The enzyme catalyses 2 glutathione + H2O2 = glutathione disulfide + 2 H2O. May constitute a glutathione peroxidase-like protective system against oxidative stresses. In Arabidopsis thaliana (Mouse-ear cress), this protein is Probable glutathione peroxidase 2 (GPX2).